A 661-amino-acid chain; its full sequence is UvrABC system protein B (661 aa).

Residues 25 to 178 enclose the Helicase ATP-binding domain; the sequence is EGILKGEKFQ…DEVIRDLIRM (154 aa). 38–45 is an ATP binding site; the sequence is GVTGSGKT. The Beta-hairpin signature appears at 91 to 114; sequence YYDYYQPEAYIPETDTYIEKDSSI. The 163-residue stretch at 429–591 folds into the Helicase C-terminal domain; it reads QIDHLIGEIR…IVPQTVRKGI (163 aa). The UVR domain maps to 625 to 660; that stretch reads EEYIKELEQEMKKLAIELEFEKAAKVRDKIFELKKL.

This sequence belongs to the UvrB family. Forms a heterotetramer with UvrA during the search for lesions. Interacts with UvrC in an incision complex.

The protein localises to the cytoplasm. Functionally, the UvrABC repair system catalyzes the recognition and processing of DNA lesions. A damage recognition complex composed of 2 UvrA and 2 UvrB subunits scans DNA for abnormalities. Upon binding of the UvrA(2)B(2) complex to a putative damaged site, the DNA wraps around one UvrB monomer. DNA wrap is dependent on ATP binding by UvrB and probably causes local melting of the DNA helix, facilitating insertion of UvrB beta-hairpin between the DNA strands. Then UvrB probes one DNA strand for the presence of a lesion. If a lesion is found the UvrA subunits dissociate and the UvrB-DNA preincision complex is formed. This complex is subsequently bound by UvrC and the second UvrB is released. If no lesion is found, the DNA wraps around the other UvrB subunit that will check the other stand for damage. The protein is UvrABC system protein B of Caldicellulosiruptor bescii (strain ATCC BAA-1888 / DSM 6725 / KCTC 15123 / Z-1320) (Anaerocellum thermophilum).